Here is a 430-residue protein sequence, read N- to C-terminus: Asparagine--tRNA ligase (430 aa).

This sequence belongs to the class-II aminoacyl-tRNA synthetase family. Homodimer.

Its subcellular location is the cytoplasm. It catalyses the reaction tRNA(Asn) + L-asparagine + ATP = L-asparaginyl-tRNA(Asn) + AMP + diphosphate + H(+). This is Asparagine--tRNA ligase from Pelotomaculum thermopropionicum (strain DSM 13744 / JCM 10971 / SI).